The primary structure comprises 288 residues: Histone H3-like centromeric protein hcp-3 (288 aa).

The interval 96-194 (YHARKEQARR…VTKTRRYRPG (99 aa)) is disordered. Basic residues predominate over residues 178–193 (MRAGRNRVTKTRRYRP). Residues 191-288 (YRPGQKALEE…LYRRLCLRHL (98 aa)) are H3-like.

This sequence belongs to the histone H3 family. As to quaternary structure, forms a nucleosome-like histone octamer containing two molecules each of H2A, H2B, hcp-3 and H4 assembled in one hcp-3-H4 heterotetramer and two H2A-H2B heterodimers. The hcp-3-H4 heterotetramer is more compact and structurally more rigid than corresponding H3-H4 heterotetramers. Interacts with knl-2. Interacts with lin-53.

The protein localises to the nucleus. The protein resides in the chromosome. Its subcellular location is the centromere. It is found in the kinetochore. Its function is as follows. Histone H3-like variant which exclusively replaces conventional H3 in the nucleosome core of centromeric chromatin at the inner plate of the kinetochore. Required for recruitment and assembly of kinetochore proteins, mitotic progression and chromosome segregation. May serve as an epigenetic mark that propagates centromere identity through replication and cell division. Might promote cleavage furrow stability during cytokinesis. Not required for chromosome segregation during meiosis. This is Histone H3-like centromeric protein hcp-3 from Caenorhabditis elegans.